A 395-amino-acid polypeptide reads, in one-letter code: Guanine nucleotide-binding protein subunit beta-5 (395 aa).

WD repeat units lie at residues 103 to 142, 145 to 184, 193 to 234, 236 to 278, 279 to 318, 320 to 362, and 365 to 394; these read GHGNKVLCMDWCKDKRRIVSSSQDGKVIVWDSFTTNKEHA, MPCTWVMACAYAPSGCAIACGGLDNKCSVYPLTFDKNENM, MHTN…QSFH, HGAD…QAFE, THESDINSVRYYPSGDAFASGSDDATCRLYDLRADREVAI, SKES…RVSI, and GHENRVSTLRVSPDGTAFCSGSWDHTLRVW.

This sequence belongs to the WD repeat G protein beta family. In terms of assembly, component of a complex composed of RGS9 (isoform RGS9-1), GNB5 and RGS9BP; within this complex, the presence of GNB5 stabilizes both itself and RGS9 and increases RGS9 GTPase-activating protein (GAP) activity. Interacts with RGS7, forming the RGS7-GNB5 complex; within this complex, the presence of GNB5 increases RGS7 GTPase-activating protein (GAP) activity. Interacts with GPR158; promotes the GTPase activator activity of the RGS7-GNB5 complex in absence of glycine, in contrast GTPase activator activity of the RGS7-GNB5 complex is inhibited in presence of glycine. Interacts with RGS6. In terms of tissue distribution, widely expressed.

It localises to the membrane. In terms of biological role, enhances GTPase-activating protein (GAP) activity of regulator of G protein signaling (RGS) proteins, such as RGS7 and RGS9, hence involved in the termination of the signaling initiated by the G protein coupled receptors (GPCRs) by accelerating the GTP hydrolysis on the G-alpha subunits, thereby promoting their inactivation. Increases RGS7 GTPase-activating protein (GAP) activity, thereby regulating mood and cognition. Increases RGS9 GTPase-activating protein (GAP) activity, hence contributes to the deactivation of G protein signaling initiated by D(2) dopamine receptors. May play an important role in neuronal signaling, including in the parasympathetic, but not sympathetic, control of heart rate. The chain is Guanine nucleotide-binding protein subunit beta-5 (GNB5) from Homo sapiens (Human).